The sequence spans 565 residues: Oxygen-dependent choline dehydrogenase (565 aa).

Residue Asp-6–Glu-35 participates in FAD binding. The disordered stretch occupies residues Gln-182–Ala-203. His-475 functions as the Proton acceptor in the catalytic mechanism.

It belongs to the GMC oxidoreductase family. FAD is required as a cofactor.

The catalysed reaction is choline + A = betaine aldehyde + AH2. It catalyses the reaction betaine aldehyde + NAD(+) + H2O = glycine betaine + NADH + 2 H(+). It functions in the pathway amine and polyamine biosynthesis; betaine biosynthesis via choline pathway; betaine aldehyde from choline (cytochrome c reductase route): step 1/1. Its function is as follows. Involved in the biosynthesis of the osmoprotectant glycine betaine. Catalyzes the oxidation of choline to betaine aldehyde and betaine aldehyde to glycine betaine at the same rate. In Pseudomonas entomophila (strain L48), this protein is Oxygen-dependent choline dehydrogenase.